Consider the following 205-residue polypeptide: Molybdenum cofactor guanylyltransferase (205 aa).

GTP contacts are provided by residues 14 to 16, Lys-27, Asp-77, and Asp-107; that span reads LAG. Residue Asp-107 coordinates Mg(2+).

Belongs to the MobA family. As to quaternary structure, monomer. It depends on Mg(2+) as a cofactor.

It is found in the cytoplasm. It catalyses the reaction Mo-molybdopterin + GTP + H(+) = Mo-molybdopterin guanine dinucleotide + diphosphate. In terms of biological role, transfers a GMP moiety from GTP to Mo-molybdopterin (Mo-MPT) cofactor (Moco or molybdenum cofactor) to form Mo-molybdopterin guanine dinucleotide (Mo-MGD) cofactor. This is Molybdenum cofactor guanylyltransferase from Burkholderia ambifaria (strain ATCC BAA-244 / DSM 16087 / CCUG 44356 / LMG 19182 / AMMD) (Burkholderia cepacia (strain AMMD)).